A 658-amino-acid chain; its full sequence is Exoribonuclease 2 (658 aa).

The 342-residue stretch at 189–530 (REDLTSLYFT…VNHRLIKQVL (342 aa)) folds into the RNB domain. Positions 576-658 (AVEFDCEIAD…ETRSIVGNII (83 aa)) constitute an S1 motif domain.

This sequence belongs to the RNR ribonuclease family. RNase II subfamily.

The protein resides in the cytoplasm. The catalysed reaction is Exonucleolytic cleavage in the 3'- to 5'-direction to yield nucleoside 5'-phosphates.. In terms of biological role, involved in mRNA degradation. Hydrolyzes single-stranded polyribonucleotides processively in the 3' to 5' direction. In Actinobacillus pleuropneumoniae serotype 7 (strain AP76), this protein is Exoribonuclease 2.